Consider the following 322-residue polypeptide: HPr kinase/phosphorylase (322 aa).

Catalysis depends on residues histidine 146 and lysine 167. 161-168 (GDSGLGKS) provides a ligand contact to ATP. Serine 168 serves as a coordination point for Mg(2+). Aspartate 185 serves as the catalytic Proton acceptor; for phosphorylation activity. Proton donor; for dephosphorylation activity. The interval 209-218 (LEVRGLGLLD) is important for the catalytic mechanism of both phosphorylation and dephosphorylation. Residue glutamate 210 coordinates Mg(2+). Arginine 250 is an active-site residue. The tract at residues 271–276 (QVAAGR) is important for the catalytic mechanism of dephosphorylation.

The protein belongs to the HPrK/P family. In terms of assembly, homohexamer. It depends on Mg(2+) as a cofactor.

The enzyme catalyses [HPr protein]-L-serine + ATP = [HPr protein]-O-phospho-L-serine + ADP + H(+). It catalyses the reaction [HPr protein]-O-phospho-L-serine + phosphate + H(+) = [HPr protein]-L-serine + diphosphate. Its function is as follows. Catalyzes the ATP- as well as the pyrophosphate-dependent phosphorylation of a specific serine residue in HPr, a phosphocarrier protein of the phosphoenolpyruvate-dependent sugar phosphotransferase system (PTS). HprK/P also catalyzes the pyrophosphate-producing, inorganic phosphate-dependent dephosphorylation (phosphorolysis) of seryl-phosphorylated HPr (P-Ser-HPr). The chain is HPr kinase/phosphorylase from Burkholderia cenocepacia (strain HI2424).